Consider the following 374-residue polypeptide: tRNA-specific 2-thiouridylase MnmA (374 aa).

ATP is bound by residues 13-20 (GMSGGVDS) and Met-39. The interval 99-101 (NPD) is interaction with target base in tRNA. The active-site Nucleophile is Cys-104. A disulfide bridge links Cys-104 with Cys-201. Gly-128 serves as a coordination point for ATP. Residues 151–153 (KDQ) form an interaction with tRNA region. Cys-201 acts as the Cysteine persulfide intermediate in catalysis. The segment at 313-314 (RY) is interaction with tRNA.

It belongs to the MnmA/TRMU family.

The protein resides in the cytoplasm. The enzyme catalyses S-sulfanyl-L-cysteinyl-[protein] + uridine(34) in tRNA + AH2 + ATP = 2-thiouridine(34) in tRNA + L-cysteinyl-[protein] + A + AMP + diphosphate + H(+). Functionally, catalyzes the 2-thiolation of uridine at the wobble position (U34) of tRNA, leading to the formation of s(2)U34. In Streptococcus equi subsp. zooepidemicus (strain MGCS10565), this protein is tRNA-specific 2-thiouridylase MnmA.